The sequence spans 512 residues: Probable malate:quinone oxidoreductase (512 aa).

It belongs to the MQO family. The cofactor is FAD.

The catalysed reaction is (S)-malate + a quinone = a quinol + oxaloacetate. It functions in the pathway carbohydrate metabolism; tricarboxylic acid cycle; oxaloacetate from (S)-malate (quinone route): step 1/1. This is Probable malate:quinone oxidoreductase from Rhodococcus erythropolis (strain PR4 / NBRC 100887).